We begin with the raw amino-acid sequence, 207 residues long: RNA chaperone ProQ (207 aa).

Residues 100–156 (TLAESKAKVQARRKEQAQKARDEEKSKPKTKKAPQQRRANKPQAQKPAKQPVETRAL) form a disordered region. Residues 111-126 (RRKEQAQKARDEEKSK) are compositionally biased toward basic and acidic residues. Residues 127–139 (PKTKKAPQQRRAN) show a composition bias toward basic residues.

This sequence belongs to the ProQ family.

It localises to the cytoplasm. Its function is as follows. RNA chaperone with significant RNA binding, RNA strand exchange and RNA duplexing activities. This chain is RNA chaperone ProQ, found in Vibrio vulnificus (strain CMCP6).